We begin with the raw amino-acid sequence, 385 residues long: Succinate--CoA ligase [ADP-forming] subunit beta (385 aa).

Residues 9–244 form the ATP-grasp domain; sequence KALFRTFGVP…LDEEDPLEVE (236 aa). Residues Lys-46, 53 to 55, Glu-99, Gln-102, and Glu-107 contribute to the ATP site; that span reads GRG. Mg(2+) is bound by residues Asn-199 and Asp-213. Substrate is bound by residues Asn-264 and 321-323; that span reads GIL.

The protein belongs to the succinate/malate CoA ligase beta subunit family. As to quaternary structure, heterotetramer of two alpha and two beta subunits. Mg(2+) is required as a cofactor.

The catalysed reaction is succinate + ATP + CoA = succinyl-CoA + ADP + phosphate. It carries out the reaction GTP + succinate + CoA = succinyl-CoA + GDP + phosphate. Its pathway is carbohydrate metabolism; tricarboxylic acid cycle; succinate from succinyl-CoA (ligase route): step 1/1. Functionally, succinyl-CoA synthetase functions in the citric acid cycle (TCA), coupling the hydrolysis of succinyl-CoA to the synthesis of either ATP or GTP and thus represents the only step of substrate-level phosphorylation in the TCA. The beta subunit provides nucleotide specificity of the enzyme and binds the substrate succinate, while the binding sites for coenzyme A and phosphate are found in the alpha subunit. This Desulforapulum autotrophicum (strain ATCC 43914 / DSM 3382 / VKM B-1955 / HRM2) (Desulfobacterium autotrophicum) protein is Succinate--CoA ligase [ADP-forming] subunit beta.